A 102-amino-acid polypeptide reads, in one-letter code: Small ribosomal subunit protein uS10 (102 aa).

The protein belongs to the universal ribosomal protein uS10 family. As to quaternary structure, part of the 30S ribosomal subunit.

Functionally, involved in the binding of tRNA to the ribosomes. In Nocardioides sp. (strain ATCC BAA-499 / JS614), this protein is Small ribosomal subunit protein uS10.